The chain runs to 595 residues: uncharacterized protein (595 aa).

The segment at 112 to 180 (VRPPGYDPES…KDVFGRALPT (69 aa)) is disordered. Composition is skewed to basic and acidic residues over residues 120 to 133 (ESAK…EKHK) and 161 to 174 (RTQE…KDVF). The CCHC-type; degenerate zinc finger occupies 211 to 228 (VKCLRCGNFGHQSGDRDC). 2 disordered regions span residues 254–290 (HTDP…IVAE) and 310–595 (KSMS…RRRN). A compositionally biased stretch (basic and acidic residues) spans 256–267 (DPSEPLKWELKQ). 2 stretches are compositionally biased toward basic residues: residues 316-331 (KKRK…KHSS) and 351-364 (RGSK…KKSK). Composition is skewed to basic and acidic residues over residues 414-428 (HYYD…EIVD), 470-539 (VSEK…HVYE), and 547-565 (FSDR…ESNR). Basic residues predominate over residues 584–595 (RKHRYSTNRRRN).

This is an uncharacterized protein from Arabidopsis thaliana (Mouse-ear cress).